The primary structure comprises 272 residues: Phosphatidylglycerol--prolipoprotein diacylglyceryl transferase (272 aa).

4 consecutive transmembrane segments (helical) span residues 16–36 (VGLH…LSSF), 62–82 (FALG…VLFY), 97–117 (IWKG…WAAV), and 129–149 (LSVT…ALLI). Residue Arg-150 coordinates a 1,2-diacyl-sn-glycero-3-phospho-(1'-sn-glycerol). Helical transmembrane passes span 206-226 (GVIR…VAVI) and 246-266 (ILTI…GIIW).

It belongs to the Lgt family.

It is found in the cell inner membrane. The catalysed reaction is L-cysteinyl-[prolipoprotein] + a 1,2-diacyl-sn-glycero-3-phospho-(1'-sn-glycerol) = an S-1,2-diacyl-sn-glyceryl-L-cysteinyl-[prolipoprotein] + sn-glycerol 1-phosphate + H(+). Its pathway is protein modification; lipoprotein biosynthesis (diacylglyceryl transfer). Catalyzes the transfer of the diacylglyceryl group from phosphatidylglycerol to the sulfhydryl group of the N-terminal cysteine of a prolipoprotein, the first step in the formation of mature lipoproteins. This is Phosphatidylglycerol--prolipoprotein diacylglyceryl transferase from Chlamydia trachomatis serovar D (strain ATCC VR-885 / DSM 19411 / UW-3/Cx).